We begin with the raw amino-acid sequence, 175 residues long: Adenine phosphoribosyltransferase (175 aa).

The protein belongs to the purine/pyrimidine phosphoribosyltransferase family. As to quaternary structure, homodimer.

The protein localises to the cytoplasm. It carries out the reaction AMP + diphosphate = 5-phospho-alpha-D-ribose 1-diphosphate + adenine. It functions in the pathway purine metabolism; AMP biosynthesis via salvage pathway; AMP from adenine: step 1/1. Catalyzes a salvage reaction resulting in the formation of AMP, that is energically less costly than de novo synthesis. This chain is Adenine phosphoribosyltransferase, found in Thermosipho melanesiensis (strain DSM 12029 / CIP 104789 / BI429).